The sequence spans 522 residues: Putative E3 ubiquitin-protein ligase RING1a (522 aa).

Polar residues predominate over residues 1 to 10 (MSVKNNSFSS). The disordered stretch occupies residues 1–119 (MSVKNNSFSS…RSPSSISGDQ (119 aa)). Residues 32–64 (LQEKDETKEEKEGDEEVKHDEAEEDQEVVKPND) are compositionally biased toward basic and acidic residues. Acidic residues predominate over residues 65–106 (AEEDDDGDDAEEDEEEEVEAEEDEEAEEEEEEEEEEEEEEED). The RING-type zinc-finger motif lies at 136–176 (CPICLGIIKKTRTVMECLHRFCRECIDKSMRLGNNECPACR). 2 disordered regions span residues 250–347 (VLMR…DTKG) and 363–385 (RGGT…KSVR). Positions 287-306 (NNNRGRDKDSSSDERGTEVR) are enriched in basic and acidic residues. A compositionally biased stretch (low complexity) spans 316-325 (SRSTQHPSSS). 2 stretches are compositionally biased toward polar residues: residues 326 to 336 (GANKNNGNCAD) and 366 to 384 (TRSN…SKSV).

As to quaternary structure, homodimer or heterodimer with RING1B. Interacts with CLF. Component of the PRC1-like complex, at least composed of RING1A, RING1B and LHP1.

It is found in the nucleus. The catalysed reaction is S-ubiquitinyl-[E2 ubiquitin-conjugating enzyme]-L-cysteine + [acceptor protein]-L-lysine = [E2 ubiquitin-conjugating enzyme]-L-cysteine + N(6)-ubiquitinyl-[acceptor protein]-L-lysine.. It functions in the pathway protein modification; protein ubiquitination. Putative E3 ubiquitin-protein ligase that mediates monoubiquitination of 'Lys-119' of histone H2A (H2AK119ub), thereby playing a central role in histone code and gene regulation. In terms of biological role, as part of the PRC1-like complex, repress class I KNOX gene expression. PcG PRC1 complex maintains the transcriptionally repressive state of many genes, including Hox genes, throughout development. PcG PRC1 complex acts via chromatin remodeling and modification of histones, rendering chromatin heritably changed in its expressibility. This is Putative E3 ubiquitin-protein ligase RING1a (RING1A) from Arabidopsis thaliana (Mouse-ear cress).